Here is a 399-residue protein sequence, read N- to C-terminus: Delta(12) acyl-lipid conjugase (11E,13E-forming) (399 aa).

The disordered stretch occupies residues 11 to 30; the sequence is RNGGGPKKKMGPGQGLGPGE. 2 helical membrane-spanning segments follow: residues 61 to 81 and 93 to 113; these read FSYL…ADTY and LAWP…WGIA. A Histidine box-1 motif is present at residues 114–118; the sequence is HDCGH. The chain crosses the membrane as a helical span at residues 126-146; it reads LVDDVVGFLIHSLVFVPYFSF. The Histidine box-2 signature appears at 150-154; the sequence is HRRHH. 3 helical membrane-spanning segments follow: residues 188 to 208, 232 to 252, and 258 to 278; these read VFII…FNIS, VLVH…YRIA, and GWLI…VVLI. Positions 325 to 329 match the Histidine box-3 motif; sequence HVVHH.

This sequence belongs to the fatty acid desaturase type 1 family. As to expression, expressed in developing seeds, but not in leaves.

The protein resides in the membrane. The enzyme catalyses a (9Z,12Z)-octadecadienoyl-containing glycerolipid + 2 Fe(II)-[cytochrome b5] + O2 + 2 H(+) = a (9Z,11E,13E)-octadecatrienoyl-containing glycerolipid + 2 Fe(III)-[cytochrome b5] + 2 H2O. It catalyses the reaction (9Z,12Z,15Z)-octadecatrienoyl-containing glycerolipid + 2 Fe(II)-[cytochrome b5] + O2 + 2 H(+) = a (9Z,11E,13E,15Z)-octadecatetraenoyl-containing glycerolipid + 2 Fe(III)-[cytochrome b5] + 2 H2O. It participates in lipid metabolism; polyunsaturated fatty acid biosynthesis. Functionally, converts linoleic acid to alpha-eleostearic acid (18:3(9Z,11E,13E)) and alpha-linolenic acid to alpha-parinaric acid (18:4(9Z,11E, 13E, 15Z)). Converts a single cis double bond at carbon 12 to two conjugated trans bonds at positions 11 and 13. In Momordica charantia (Bitter gourd), this protein is Delta(12) acyl-lipid conjugase (11E,13E-forming).